A 402-amino-acid polypeptide reads, in one-letter code: NADH-quinone oxidoreductase subunit D (402 aa).

The protein belongs to the complex I 49 kDa subunit family. As to quaternary structure, NDH-1 is composed of 14 different subunits. Subunits NuoB, C, D, E, F, and G constitute the peripheral sector of the complex.

The protein localises to the cell inner membrane. The catalysed reaction is a quinone + NADH + 5 H(+)(in) = a quinol + NAD(+) + 4 H(+)(out). NDH-1 shuttles electrons from NADH, via FMN and iron-sulfur (Fe-S) centers, to quinones in the respiratory chain. The immediate electron acceptor for the enzyme in this species is believed to be ubiquinone. Couples the redox reaction to proton translocation (for every two electrons transferred, four hydrogen ions are translocated across the cytoplasmic membrane), and thus conserves the redox energy in a proton gradient. The sequence is that of NADH-quinone oxidoreductase subunit D from Rhodopseudomonas palustris (strain ATCC BAA-98 / CGA009).